A 90-amino-acid polypeptide reads, in one-letter code: UPF0237 protein MJ1558 (90 aa).

Residues 5–79 (VVSVIGQDRT…EELGVQVIVQ (75 aa)) enclose the ACT domain.

Belongs to the UPF0237 family.

The polypeptide is UPF0237 protein MJ1558 (Methanocaldococcus jannaschii (strain ATCC 43067 / DSM 2661 / JAL-1 / JCM 10045 / NBRC 100440) (Methanococcus jannaschii)).